Here is a 432-residue protein sequence, read N- to C-terminus: Serine--tRNA ligase (432 aa).

230–232 (TAE) lines the L-serine pocket. Residue 261–263 (RSE) participates in ATP binding. L-serine is bound at residue Glu-284. 348 to 351 (EVSS) lines the ATP pocket. Ser-383 is an L-serine binding site.

The protein belongs to the class-II aminoacyl-tRNA synthetase family. Type-1 seryl-tRNA synthetase subfamily. Homodimer. The tRNA molecule binds across the dimer.

The protein resides in the cytoplasm. The enzyme catalyses tRNA(Ser) + L-serine + ATP = L-seryl-tRNA(Ser) + AMP + diphosphate + H(+). The catalysed reaction is tRNA(Sec) + L-serine + ATP = L-seryl-tRNA(Sec) + AMP + diphosphate + H(+). It participates in aminoacyl-tRNA biosynthesis; selenocysteinyl-tRNA(Sec) biosynthesis; L-seryl-tRNA(Sec) from L-serine and tRNA(Sec): step 1/1. Its function is as follows. Catalyzes the attachment of serine to tRNA(Ser). Is also able to aminoacylate tRNA(Sec) with serine, to form the misacylated tRNA L-seryl-tRNA(Sec), which will be further converted into selenocysteinyl-tRNA(Sec). The polypeptide is Serine--tRNA ligase (Limosilactobacillus fermentum (strain NBRC 3956 / LMG 18251) (Lactobacillus fermentum)).